The primary structure comprises 710 residues: Ephexin-1 (710 aa).

Over residues 1 to 20 the composition is skewed to basic and acidic residues; sequence METKNSEDWGKPQRKSESSS. The tract at residues 1 to 146 is disordered; the sequence is METKNSEDWG…TPEECPALTD (146 aa). The tract at residues 1–272 is regulatory region; modulates activity toward RHOA, RAC1 and CDC42; the sequence is METKNSEDWG…VLDILQPEEI (272 aa). Polar residues predominate over residues 123–137; the sequence is QEASESSSTPGNGTT. Residue Tyr-177 is modified to Phosphotyrosine. A disordered region spans residues 192–234; that stretch reads RRQQDAEIQGNSDGSQVGEDAGEEEEEEEEGEEEELASPPERR. Residues 211-227 show a composition bias toward acidic residues; it reads DAGEEEEEEEEGEEEEL. A DH domain is found at 273–457; sequence RLQEAMFELV…EMVVKACNEG (185 aa). The PH domain maps to 489–601; sequence WLLKQGELQQ…WMTSLAPNRR (113 aa). The region spanning 612-673 is the SH3 domain; that stretch reads LDCPQVQCVH…PSSMTEEILN (62 aa). Positions 688–699 are enriched in basic and acidic residues; it reads HKMEDPQRSQNK. The disordered stretch occupies residues 688 to 710; sequence HKMEDPQRSQNKDRRKLGSRNRQ. The span at 700–710 shows a compositional bias: basic residues; the sequence is DRRKLGSRNRQ.

As to quaternary structure, interacts with CDK5R1 and EPHA4; activated by EPHA4 through the CDK5 kinase. In terms of processing, src-dependent phosphorylation at Tyr-177 upon EPHA4 activation increases the guanine exchange factor activity toward RHOA. Phosphorylation by CDK5 upon EPHA4 activation by EFNA1 may regulate dendritic spine morphogenesis. As to expression, highly expressed in brain and to a lower extent in eye.

The protein localises to the cytoplasm. The protein resides in the membrane. Its subcellular location is the cell projection. It localises to the growth cone. Acts as a guanine nucleotide exchange factor (GEF) which differentially activates the GTPases RHOA, RAC1 and CDC42. Plays a role in axon guidance regulating ephrin-induced growth cone collapse and dendritic spine morphogenesis. Upon activation by ephrin through EPHA4, the GEF activity switches toward RHOA resulting in its activation. Activated RHOA promotes cone retraction at the expense of RAC1- and CDC42-stimulated growth cone extension. The sequence is that of Ephexin-1 (Ngef) from Mus musculus (Mouse).